Here is a 100-residue protein sequence, read N- to C-terminus: NADH-quinone oxidoreductase subunit K (100 aa).

Helical transmembrane passes span methionine 1–glycine 21, isoleucine 28–alanine 48, and phenylalanine 64–phenylalanine 84.

The protein belongs to the complex I subunit 4L family. In terms of assembly, NDH-1 is composed of 14 different subunits. Subunits NuoA, H, J, K, L, M, N constitute the membrane sector of the complex.

The protein localises to the cell inner membrane. It catalyses the reaction a quinone + NADH + 5 H(+)(in) = a quinol + NAD(+) + 4 H(+)(out). Functionally, NDH-1 shuttles electrons from NADH, via FMN and iron-sulfur (Fe-S) centers, to quinones in the respiratory chain. The immediate electron acceptor for the enzyme in this species is believed to be ubiquinone. Couples the redox reaction to proton translocation (for every two electrons transferred, four hydrogen ions are translocated across the cytoplasmic membrane), and thus conserves the redox energy in a proton gradient. This is NADH-quinone oxidoreductase subunit K from Helicobacter pylori (strain B38).